Reading from the N-terminus, the 349-residue chain is 5,10-methylenetetrahydromethanopterin reductase (349 aa).

This sequence belongs to the mer family. Homotetramer composed of two loosely associated dimers.

It is found in the cytoplasm. The enzyme catalyses 5-methyl-5,6,7,8-tetrahydromethanopterin + oxidized coenzyme F420-(gamma-L-Glu)(n) + H(+) = 5,10-methylenetetrahydromethanopterin + reduced coenzyme F420-(gamma-L-Glu)(n). It functions in the pathway one-carbon metabolism; methanogenesis from CO(2); methyl-coenzyme M from 5,10-methylene-5,6,7,8-tetrahydromethanopterin: step 1/2. Its activity is regulated as follows. Requires the presence of relatively high concentrations of either sulfate or phosphate for maximal activity. Its function is as follows. Catalyzes the reversible reduction of methylene-H(4)MPT to methyl-H(4)MPT. In Methanopyrus kandleri (strain AV19 / DSM 6324 / JCM 9639 / NBRC 100938), this protein is 5,10-methylenetetrahydromethanopterin reductase.